Reading from the N-terminus, the 144-residue chain is Deoxyuridine 5'-triphosphate nucleotidohydrolase (144 aa).

Residues 63–65 (RSG), Asn-76, and 80–82 (TID) each bind substrate.

This sequence belongs to the dUTPase family. Mg(2+) is required as a cofactor.

The catalysed reaction is dUTP + H2O = dUMP + diphosphate + H(+). Its pathway is pyrimidine metabolism; dUMP biosynthesis; dUMP from dCTP (dUTP route): step 2/2. This enzyme is involved in nucleotide metabolism: it produces dUMP, the immediate precursor of thymidine nucleotides and it decreases the intracellular concentration of dUTP so that uracil cannot be incorporated into DNA. This Bacteroides thetaiotaomicron (strain ATCC 29148 / DSM 2079 / JCM 5827 / CCUG 10774 / NCTC 10582 / VPI-5482 / E50) protein is Deoxyuridine 5'-triphosphate nucleotidohydrolase.